The sequence spans 436 residues: Trigger factor (436 aa).

Positions glutamate 161–proline 246 constitute a PPIase FKBP-type domain.

This sequence belongs to the FKBP-type PPIase family. Tig subfamily.

The protein resides in the cytoplasm. It carries out the reaction [protein]-peptidylproline (omega=180) = [protein]-peptidylproline (omega=0). Functionally, involved in protein export. Acts as a chaperone by maintaining the newly synthesized protein in an open conformation. Functions as a peptidyl-prolyl cis-trans isomerase. The sequence is that of Trigger factor from Pseudomonas fluorescens (strain SBW25).